The primary structure comprises 372 residues: MHC class I-like protein MILL2 (372 aa).

A signal peptide spans 1–26; that stretch reads MEASSGTAGPAVLLLILALLLTESQG. Residues 28 to 119 are alpha-1; that stretch reads RSQGTHTLRY…MINQKGHDKG (92 aa). 3 cysteine pairs are disulfide-bonded: Cys78/Cys89, Cys129/Cys191, and Cys230/Cys287. Positions 120 to 210 are alpha-2; the sequence is PYTLQATLDC…SLSNVLPDTG (91 aa). Asn134, Asn234, and Asn293 each carry an N-linked (GlcNAc...) asparagine glycan. One can recognise an Ig-like C1-type domain in the interval 192 to 302; that stretch reads PARLQRHLAS…NRTIMQTAVS (111 aa). The alpha-3 stretch occupies residues 211–339; it reads SPVVIVTCRN…VVDGGLVTGN (129 aa). The interval 308–349 is disordered; the sequence is WPSASWATRQEAEGPHRTHNDHVVDGGLVTGNANKDSPDASS. Residues 317–331 show a composition bias toward basic and acidic residues; the sequence is QEAEGPHRTHNDHVV. The tract at residues 340 to 348 is connecting peptide; that stretch reads ANKDSPDAS. Ser349 is lipidated: GPI-anchor amidated serine. Positions 350 to 372 are cleaved as a propeptide — removed in mature form; it reads CATASAISAFPVVVLSVALPRAN.

It belongs to the MHC class I family. In terms of assembly, heterodimer with B2M. Ubiquitously expressed in neonatal and adult tissues.

The protein resides in the cell membrane. Its function is as follows. Binds to heparan sulfate proteoglycans on the surface of fibroblast cells. In Rattus norvegicus (Rat), this protein is MHC class I-like protein MILL2.